A 103-amino-acid chain; its full sequence is Large ribosomal subunit protein bL21 (103 aa).

The protein belongs to the bacterial ribosomal protein bL21 family. In terms of assembly, part of the 50S ribosomal subunit. Contacts protein L20.

In terms of biological role, this protein binds to 23S rRNA in the presence of protein L20. The polypeptide is Large ribosomal subunit protein bL21 (Pasteurella multocida (strain Pm70)).